We begin with the raw amino-acid sequence, 378 residues long: 3,6-diketocamphane 1,6-monooxygenase (378 aa).

FMN-binding positions include His10, Ser44, Met76, and 201–209 (TGFSYNSPS).

Belongs to the bacterial luciferase oxidoreductase family. Homodimer. Likely forms a loose transient complex with a P.putida flavin reductase that provides the required FMNH(2) to the enzyme.

The catalysed reaction is (1S,4S)-bornane-2,5-dione + FMNH2 + O2 = (1S,4S)-5-oxo-1,2-campholide + FMN + H2O + H(+). Involved in the degradation and assimilation of (-)-camphor, which allows P.putida strain NCIMB 10007 to grow on this enantiomer of camphor as the sole carbon source. Catalyzes the FMNH(2)-dependent lactonization of 3,6-diketocamphane via a Baeyer-Villiger oxidation to produce the unstable lactone 5-oxo-1,2-campholide with (S,S) configuration, that presumably undergoes spontaneous hydrolysis to form 2-oxo-Delta(3)-4,5,5-trimethylcyclopentenylacetate. Is also able to convert (-)-camphor to the corresponding lactone in vitro. Shows no conversion of (+)-camphor, (+)-fenchone, (-)-fenchone, and (+)-nopinone. Acts on other bicyclic ketones but very poorly on a few 2- and 4-substituted monocyclic ketones. The chain is 3,6-diketocamphane 1,6-monooxygenase from Pseudomonas putida (Arthrobacter siderocapsulatus).